A 378-amino-acid chain; its full sequence is Chorismate synthase (378 aa).

Residues arginine 48 and arginine 54 each coordinate NADP(+). FMN is bound by residues 125–127 (RSS), 238–239 (NA), glycine 278, 293–297 (KPTSS), and arginine 319.

Belongs to the chorismate synthase family. As to quaternary structure, homotetramer. FMNH2 serves as cofactor.

It carries out the reaction 5-O-(1-carboxyvinyl)-3-phosphoshikimate = chorismate + phosphate. Its pathway is metabolic intermediate biosynthesis; chorismate biosynthesis; chorismate from D-erythrose 4-phosphate and phosphoenolpyruvate: step 7/7. Its function is as follows. Catalyzes the anti-1,4-elimination of the C-3 phosphate and the C-6 proR hydrogen from 5-enolpyruvylshikimate-3-phosphate (EPSP) to yield chorismate, which is the branch point compound that serves as the starting substrate for the three terminal pathways of aromatic amino acid biosynthesis. This reaction introduces a second double bond into the aromatic ring system. This chain is Chorismate synthase, found in Azoarcus sp. (strain BH72).